We begin with the raw amino-acid sequence, 331 residues long: RNA 3'-terminal phosphate cyclase (331 aa).

ATP is bound by residues Gln100 and 276-280; that span reads HLADQ. His301 (tele-AMP-histidine intermediate) is an active-site residue.

This sequence belongs to the RNA 3'-terminal cyclase family. Type 1 subfamily.

It is found in the cytoplasm. It carries out the reaction a 3'-end 3'-phospho-ribonucleotide-RNA + ATP = a 3'-end 2',3'-cyclophospho-ribonucleotide-RNA + AMP + diphosphate. Functionally, catalyzes the conversion of 3'-phosphate to a 2',3'-cyclic phosphodiester at the end of RNA. The mechanism of action of the enzyme occurs in 3 steps: (A) adenylation of the enzyme by ATP; (B) transfer of adenylate to an RNA-N3'P to produce RNA-N3'PP5'A; (C) and attack of the adjacent 2'-hydroxyl on the 3'-phosphorus in the diester linkage to produce the cyclic end product. The biological role of this enzyme is unknown but it is likely to function in some aspects of cellular RNA processing. The polypeptide is RNA 3'-terminal phosphate cyclase (Methanococcoides burtonii (strain DSM 6242 / NBRC 107633 / OCM 468 / ACE-M)).